We begin with the raw amino-acid sequence, 309 residues long: NADH-cytochrome b5 reductase 2 (309 aa).

A helical membrane pass occupies residues 3–23; that stretch reads ILTAPVLIGVSIVVITVLYLF. The FAD-binding FR-type domain occupies 48–160; it reads SVKYPLPLIE…RGPNGLLVYN (113 aa). Residues 140–170 and 179–214 contribute to the FAD site; these read DNMK…IRPD and KFKH…VCSL.

The protein belongs to the flavoprotein pyridine nucleotide cytochrome reductase family. FAD serves as cofactor.

Its subcellular location is the membrane. It carries out the reaction 2 Fe(III)-[cytochrome b5] + NADH = 2 Fe(II)-[cytochrome b5] + NAD(+) + H(+). Functionally, NADH-cytochrome b5 reductases are involved in desaturation and elongation of fatty acids, cholesterol biosynthesis and drug metabolism. The protein is NADH-cytochrome b5 reductase 2 (cyb5r2) of Danio rerio (Zebrafish).